The sequence spans 1187 residues: Metabotropic glutamate receptor-like protein Q (1187 aa).

The Extracellular segment spans residues M1–T735. 14 N-linked (GlcNAc...) asparagine glycosylation sites follow: N35, N44, N55, N177, N258, N275, N397, N402, N462, N526, N527, N557, N562, and N684. The helical transmembrane segment at V736 to I756 threads the bilayer. Residues A757–N768 are Cytoplasmic-facing. The helical transmembrane segment at I769 to S789 threads the bilayer. Residues I790–S796 lie on the Extracellular side of the membrane. Residue N794 is glycosylated (N-linked (GlcNAc...) asparagine). A helical transmembrane segment spans residues C797–L817. The Cytoplasmic segment spans residues K818–K843. The helical transmembrane segment at Y844–P864 threads the bilayer. The Extracellular segment spans residues S865–Y888. A helical membrane pass occupies residues V889–A909. Residues M910 to S925 lie on the Cytoplasmic side of the membrane. Residues L926–F946 form a helical membrane-spanning segment. Residues Y947–T955 lie on the Extracellular side of the membrane. Residues I956–F976 form a helical membrane-spanning segment. Residues I977 to L1095 lie on the Cytoplasmic side of the membrane. Positions I1074–S1105 are enriched in polar residues. The interval I1074 to S1187 is disordered. Positions K1114–I1124 are enriched in basic residues. The span at I1125–N1174 shows a compositional bias: low complexity.

Belongs to the G-protein coupled receptor 3 family. GABA-B receptor subfamily.

The protein localises to the membrane. The protein is Metabotropic glutamate receptor-like protein Q (grlQ) of Dictyostelium discoideum (Social amoeba).